A 591-amino-acid polypeptide reads, in one-letter code: Aspartate--tRNA(Asp/Asn) ligase (591 aa).

Residue Glu-176 coordinates L-aspartate. The tract at residues 200-203 (QLFK) is aspartate. Arg-222 serves as a coordination point for L-aspartate. ATP is bound by residues 222–224 (RDE) and Gln-231. His-450 contributes to the L-aspartate binding site. Glu-484 provides a ligand contact to ATP. Arg-491 provides a ligand contact to L-aspartate. Residue 536 to 539 (GLDR) coordinates ATP.

Belongs to the class-II aminoacyl-tRNA synthetase family. Type 1 subfamily. In terms of assembly, homodimer.

It is found in the cytoplasm. The enzyme catalyses tRNA(Asx) + L-aspartate + ATP = L-aspartyl-tRNA(Asx) + AMP + diphosphate. Aspartyl-tRNA synthetase with relaxed tRNA specificity since it is able to aspartylate not only its cognate tRNA(Asp) but also tRNA(Asn). Reaction proceeds in two steps: L-aspartate is first activated by ATP to form Asp-AMP and then transferred to the acceptor end of tRNA(Asp/Asn). The sequence is that of Aspartate--tRNA(Asp/Asn) ligase from Bacillus anthracis (strain CDC 684 / NRRL 3495).